The chain runs to 822 residues: Penicillin-binding protein 1A (822 aa).

At 1–5 the chain is on the cytoplasmic side; sequence MRLLK. A helical; Signal-anchor for type II membrane protein membrane pass occupies residues 6–26; the sequence is FLWWTCVTLICGVLLSFSGAY. At 27–822 the chain is on the periplasmic side; the sequence is LYLSPSLPSV…DDEGAPIDLF (796 aa). Positions 48–216 are transglycosylase; the sequence is LKVYSEDGKL…SRYNPLVNPT (169 aa). Glutamate 86 acts as the Proton donor; for transglycosylase activity in catalysis. The interval 403 to 744 is transpeptidase; the sequence is IRVQRQEDGT…GTVALPIWIR (342 aa). The active-site Acyl-ester intermediate; for transpeptidase activity is the serine 461. 2 disordered regions span residues 614–654 and 790–822; these read AADA…FEPT and KNED…IDLF. The segment covering 812–822 has biased composition (acidic residues); the sequence is PDDEGAPIDLF.

This sequence in the N-terminal section; belongs to the glycosyltransferase 51 family. In the C-terminal section; belongs to the transpeptidase family.

The protein localises to the cell inner membrane. It catalyses the reaction [GlcNAc-(1-&gt;4)-Mur2Ac(oyl-L-Ala-gamma-D-Glu-L-Lys-D-Ala-D-Ala)](n)-di-trans,octa-cis-undecaprenyl diphosphate + beta-D-GlcNAc-(1-&gt;4)-Mur2Ac(oyl-L-Ala-gamma-D-Glu-L-Lys-D-Ala-D-Ala)-di-trans,octa-cis-undecaprenyl diphosphate = [GlcNAc-(1-&gt;4)-Mur2Ac(oyl-L-Ala-gamma-D-Glu-L-Lys-D-Ala-D-Ala)](n+1)-di-trans,octa-cis-undecaprenyl diphosphate + di-trans,octa-cis-undecaprenyl diphosphate + H(+). The enzyme catalyses Preferential cleavage: (Ac)2-L-Lys-D-Ala-|-D-Ala. Also transpeptidation of peptidyl-alanyl moieties that are N-acyl substituents of D-alanine.. It participates in cell wall biogenesis; peptidoglycan biosynthesis. Its function is as follows. Cell wall formation. Synthesis of cross-linked peptidoglycan from the lipid intermediates. The enzyme has a penicillin-insensitive transglycosylase N-terminal domain (formation of linear glycan strands) and a penicillin-sensitive transpeptidase C-terminal domain (cross-linking of the peptide subunits). This Pseudomonas aeruginosa (strain ATCC 15692 / DSM 22644 / CIP 104116 / JCM 14847 / LMG 12228 / 1C / PRS 101 / PAO1) protein is Penicillin-binding protein 1A (mrcA).